The primary structure comprises 604 residues: Zinc finger protein chinmo (604 aa).

The 67-residue stretch at 32–98 (ADVILSCDGV…MYKGEVHVSQ (67 aa)) folds into the BTB domain. Disordered regions lie at residues 122-155 (RLAA…SGGS), 291-310 (CDSL…GYTH), 330-437 (RSPY…DEST), and 450-470 (NLKY…TPNT). The segment covering 364-374 (PSSSASSTAPT) has biased composition (low complexity). Over residues 384 to 409 (ASPQSSRYENHSPSTTAGNGNATSSL) the composition is skewed to polar residues. The span at 425-437 (ANDDDRELMDEST) shows a compositional bias: acidic residues. Positions 461 to 470 (SNTSSTTPNT) are enriched in low complexity. 2 C2H2-type zinc fingers span residues 517–540 (LKCL…RQRH) and 545–568 (VPCP…AREH).

In terms of tissue distribution, broadly expressed in the developing larval central nervous system (at protein level). Expressed in the larval lymph gland and circulating hemocytes (at protein level). Expressed in all cell types of the adult testis stem cell niche but not detected in somatic cells of the adult ovary (at protein level). In the testis, expressed at high levels in cyst stem cells and early cyst cells and, at lower levels, in germline stem cells (at protein level).

The protein localises to the nucleus. Required for morphological differentiation of postmitotic neurons during postembryonic brain development. Ensures production of appropriate neuron subtypes within a lineage by preventing precocious generation of late neuronal types of that lineage. Acts as a downstream mediator of the transcriptional activator Stat92e and is required for the development of the eye-antennal disk which gives rise to the adult eye, antenna and head capsule, for transcriptional repression of the Notch receptor ligand Ser and for the self-renewal of cyst stem cells in the testis. In the adult testis, maintains the male identify of adult somatic cyst stem cells. Represses expression and alternative splicing of transformer pre-mRNA, resulting in the production of the male-specific isoform of transcription factor dsx which ensures male-specific transcription of target genes. Plays a role in actin nuclear localization through its involvement in repressing the expression of the kinase Cdi. This maintains the cofilin/actin-depolymerizing factor homolog tsr in its unphosphorylated state which is required for actin nuclear import. The chain is Zinc finger protein chinmo from Drosophila melanogaster (Fruit fly).